A 202-amino-acid polypeptide reads, in one-letter code: Crossover junction endodeoxyribonuclease RuvC (202 aa).

Residues aspartate 7, glutamate 68, and aspartate 141 contribute to the active site. Residues aspartate 7, glutamate 68, and aspartate 141 each coordinate Mg(2+).

The protein belongs to the RuvC family. As to quaternary structure, homodimer which binds Holliday junction (HJ) DNA. The HJ becomes 2-fold symmetrical on binding to RuvC with unstacked arms; it has a different conformation from HJ DNA in complex with RuvA. In the full resolvosome a probable DNA-RuvA(4)-RuvB(12)-RuvC(2) complex forms which resolves the HJ. It depends on Mg(2+) as a cofactor.

It is found in the cytoplasm. It carries out the reaction Endonucleolytic cleavage at a junction such as a reciprocal single-stranded crossover between two homologous DNA duplexes (Holliday junction).. In terms of biological role, the RuvA-RuvB-RuvC complex processes Holliday junction (HJ) DNA during genetic recombination and DNA repair. Endonuclease that resolves HJ intermediates. Cleaves cruciform DNA by making single-stranded nicks across the HJ at symmetrical positions within the homologous arms, yielding a 5'-phosphate and a 3'-hydroxyl group; requires a central core of homology in the junction. The consensus cleavage sequence is 5'-(A/T)TT(C/G)-3'. Cleavage occurs on the 3'-side of the TT dinucleotide at the point of strand exchange. HJ branch migration catalyzed by RuvA-RuvB allows RuvC to scan DNA until it finds its consensus sequence, where it cleaves and resolves the cruciform DNA. The polypeptide is Crossover junction endodeoxyribonuclease RuvC (Clavibacter michiganensis subsp. michiganensis (strain NCPPB 382)).